The sequence spans 332 residues: Adenosine receptor A2b (332 aa).

Topologically, residues 1–8 (MQLETQDA) are extracellular. A helical transmembrane segment spans residues 9–33 (LYVALELVIAALAVAGNVLVCAAVG). Residues 34-43 (ASSALQTPTN) lie on the Cytoplasmic side of the membrane. The helical transmembrane segment at 44 to 67 (YFLVSLATADVAVGLFAIPFAITI) threads the bilayer. The Extracellular portion of the chain corresponds to 68–78 (SLGFCTDFHGC). Cys-78 and Cys-171 form a disulfide bridge. Residues 79 to 101 (LFLACFVLVLTQSSIFSLLAVAV) traverse the membrane as a helical segment. Residues 102–121 (DRYLAIRVPLRYKGLVTGTR) lie on the Cytoplasmic side of the membrane. Residues 122–144 (ARGIIAVLWVLAFGIGLTPFLGW) traverse the membrane as a helical segment. Over 145 to 178 (NSKDSATSNCTELGDGIANKSCCPVTCLFENVVP) the chain is Extracellular. N-linked (GlcNAc...) asparagine glycans are attached at residues Asn-153 and Asn-163. Glu-174 serves as a coordination point for adenosine. Residues 179-203 (MSYMVYFNFFGCVLPPLLIMLVIYI) form a helical membrane-spanning segment. Residues 204–235 (KIFMVACKQLQRMELMDHSRTTLQREIHAAKS) lie on the Cytoplasmic side of the membrane. The helical transmembrane segment at 236-259 (LAMIVGIFALCWLPVHAINCITLF) threads the bilayer. Adenosine is bound at residue Asn-254. Residues 260–267 (HPALAKDK) lie on the Extracellular side of the membrane. A helical membrane pass occupies residues 268–291 (PKWVMNVAILLSHANSVVNPIVYA). Adenosine contacts are provided by Ser-279 and His-280. Residues 292 to 332 (YRNRDFRYSFHKIISRYVLCQAETKGGSGQAGAQSTLSLGL) are Cytoplasmic-facing. Residue Cys-311 is the site of S-palmitoyl cysteine attachment.

Belongs to the G-protein coupled receptor 1 family.

The protein resides in the cell membrane. In terms of biological role, receptor for adenosine. The activity of this receptor is mediated by G proteins which activate adenylyl cyclase. The sequence is that of Adenosine receptor A2b (Adora2b) from Mus musculus (Mouse).